Reading from the N-terminus, the 406-residue chain is Sorting nexin-6 (406 aa).

Met-1 is subject to N-acetylmethionine. An N-acetylmethionine; in Sorting nexin-6, N-terminally processed modification is found at Met-2. The interaction with PIM1 stretch occupies residues 2–179; the sequence is MEGLDDGPDF…NQDLSVRGKN (178 aa). The 148-residue stretch at 26-173 folds into the PX domain; sequence LQSDAALQVD…HVFLEYNQDL (148 aa). A 1,2-diacyl-sn-glycero-3-phospho-(1D-myo-inositol-4,5-bisphosphate) is bound by residues 41 to 47, 100 to 106, and 114 to 117; these read SERDRVK, FDASREK, and EGSM. A phosphoserine mark is found at Ser-116 and Ser-194. The segment at 182–199 is membrane-binding amphipathic helix; it reads EKLEDFFKNMVKSADGVI. The 204-residue stretch at 203 to 406 folds into the BAR domain; it reads VKDVDDFFEH…NCLAVLNGDT (204 aa).

Belongs to the sorting nexin family. In terms of assembly, forms heterodimers with BAR domain-containing sorting nexins SNX1 and SNX2. The heterodimers are proposed to self-assemble into helical arrays on the membrane to stabilize and expand local membrane curvature underlying endosomal tubule formation. Thought to be a component of the originally described retromer complex (also called SNX-BAR retromer) which is a pentamer containing the heterotrimeric retromer cargo-selective complex (CSC), also described as vacuolar protein sorting subcomplex (VPS), and a heterodimeric membrane-deforming subcomplex formed between SNX1 or SNX2 and SNX5 or SNX6 (also called SNX-BAR subcomplex); the respective CSC and SNX-BAR subcomplexes associate with low affinity. Interacts with SNX1, SNX2, VPS26A, VPS29, VPS35, TGFB receptors, BACE1, BRMS1, PIP5K1C. Interacts with DCTN1; the association with DCTN1 is involved in movement of retromer-c ontaining vesicles toward the TGN. Interacts with PIM1; translocating SNX6 to the nucleus. Interacts with CDKN1B and GIT1. Post-translationally, in vitro phosphorylated by PIM1; not affecting PIM1-dependent nuclear translocation.

The protein resides in the early endosome membrane. It is found in the cytoplasmic vesicle. Its subcellular location is the cytoplasm. The protein localises to the nucleus. Its function is as follows. Involved in several stages of intracellular trafficking. Interacts with membranes phosphatidylinositol 3,4-bisphosphate and/or phosphatidylinositol 4,5-bisphosphate. Acts in part as component of the retromer membrane-deforming SNX-BAR subcomplex. The SNX-BAR retromer mediates retrograde transport of cargo proteins from endosomes to the trans-Golgi network (TGN) and is involved in endosome-to-plasma membrane transport for cargo protein recycling. The SNX-BAR subcomplex functions to deform the donor membrane into a tubular profile called endosome-to-TGN transport carrier (ETC). Does not have in vitro vesicle-to-membrane remodeling activity. Involved in retrograde endosome-to-TGN transport of lysosomal enzyme receptor IGF2R. May function as link between transport vesicles and dynactin. Negatively regulates retrograde transport of BACE1 from the cell surface to the trans-Golgi network. Involved in E-cadherin sorting and degradation; inhibits PIP5K1C-mediated E-cadherin degradation. In association with GIT1 involved in EGFR degradation. Promotes lysosomal degradation of CDKN1B. May contribute to transcription regulation. This chain is Sorting nexin-6 (Snx6), found in Mus musculus (Mouse).